Here is a 385-residue protein sequence, read N- to C-terminus: Xanthosine methyltransferase 2 (385 aa).

Tyr-18 is an S-adenosyl-L-homocysteine binding site. Xanthosine-binding residues include Asn-21 and Asn-25. Residues Cys-62, Asn-67, Asp-101, Leu-102, Ser-140, Phe-141, and Cys-157 each coordinate S-adenosyl-L-homocysteine. Tyr-158 serves as a coordination point for xanthosine. An S-adenosyl-L-homocysteine-binding site is contributed by Cys-159. His-161 and Trp-162 together coordinate xanthosine. Positions 179, 261, 263, and 264 each coordinate Mg(2+). Positions 329, 334, and 369 each coordinate xanthosine.

Belongs to the methyltransferase superfamily. Type-7 methyltransferase family. Mg(2+) is required as a cofactor. Expressed at low levels in young leaves but not in mature leaves. Barely detectable in fruits (grains).

The enzyme catalyses xanthosine + S-adenosyl-L-methionine = 7-methylxanthosine + S-adenosyl-L-homocysteine. It functions in the pathway alkaloid biosynthesis. In terms of biological role, involved in the biosynthesis of caffeine. Specific for xanthosine and could not use xanthosine 5'-monophosphate (XMP) as substrate. Catalyzes the 7-N-methylation activity of xanthosine, but does not have 1-N- or 3-N-methylation activity. This Coffea arabica (Arabian coffee) protein is Xanthosine methyltransferase 2.